A 287-amino-acid polypeptide reads, in one-letter code: 4-hydroxybenzoate octaprenyltransferase (287 aa).

Helical transmembrane passes span 35-55, 96-116, 211-231, 235-255, and 262-282; these read FAAGGLPDLKVFIIFVIGVVV, LFGVMGLFAFSLVLMLNPLVV, IIAAFQLAALSCFIIAGMLAG, IYGLGILAFIGFAVYQQKLIY, and CFTAFLNNNWAGMVLYIALTL.

It belongs to the UbiA prenyltransferase family. Mg(2+) is required as a cofactor.

It localises to the cell inner membrane. It carries out the reaction all-trans-octaprenyl diphosphate + 4-hydroxybenzoate = 4-hydroxy-3-(all-trans-octaprenyl)benzoate + diphosphate. It functions in the pathway cofactor biosynthesis; ubiquinone biosynthesis. Catalyzes the prenylation of para-hydroxybenzoate (PHB) with an all-trans polyprenyl group. Mediates the second step in the final reaction sequence of ubiquinone-8 (UQ-8) biosynthesis, which is the condensation of the polyisoprenoid side chain with PHB, generating the first membrane-bound Q intermediate 3-octaprenyl-4-hydroxybenzoate. This is 4-hydroxybenzoate octaprenyltransferase from Shewanella halifaxensis (strain HAW-EB4).